We begin with the raw amino-acid sequence, 174 residues long: uncharacterized protein (174 aa).

An N-acetyltransferase domain is found at 42–174 (SNTKNINLYE…GVKGMFWYPR (133 aa)).

Belongs to the acetyltransferase family. Ycf52 subfamily.

It localises to the plastid. The protein localises to the chloroplast. This is an uncharacterized protein from Porphyra purpurea (Red seaweed).